A 159-amino-acid polypeptide reads, in one-letter code: Cytochrome c-type biogenesis protein CcmE (159 aa).

Residues Met-1 to Arg-8 lie on the Cytoplasmic side of the membrane. A helical; Signal-anchor for type II membrane protein membrane pass occupies residues Leu-9 to Ala-29. Residues Leu-30 to Ser-159 are Periplasmic-facing. Residues His-130 and Tyr-134 each contribute to the heme site. Residues His-130–Ser-159 form a disordered region.

The protein belongs to the CcmE/CycJ family.

Its subcellular location is the cell inner membrane. In terms of biological role, heme chaperone required for the biogenesis of c-type cytochromes. Transiently binds heme delivered by CcmC and transfers the heme to apo-cytochromes in a process facilitated by CcmF and CcmH. The polypeptide is Cytochrome c-type biogenesis protein CcmE (Citrobacter koseri (strain ATCC BAA-895 / CDC 4225-83 / SGSC4696)).